The chain runs to 662 residues: MINRITDNKFELISKYEPSGDQPQAIEQLVDNIEGGEKAQILMGATGTGKTYTMSQVIAQVNKPTLVIAHNKTLAGQLYGEFKEFFPNNAVEYFVSYYDYYQPEAYVPSSDTYIEKDSSVNDEIDKLRHSATSALLERNDVIVVASVSCIYGLGSPKEYSDSVVSLRPGLEISRDKLLNDLVDIQFERNDIDFQRGKFRVRGDVVEIFPASRDEHAFRVEFFGDEIDRIREVEALTGRVLGEVDHLAIFPATHFVTNEDHMEVAIAKIQAELEEQLAKFEKEGKLLEAQRLKQRTEYDIEMLREMGYTNGVENYSRHMDGRSEGEPPYTLLDFFPDDFLIMIDESHMTMGQIRGMYNGDRSRKEMLVNYGFRLPSALDNRPLRREEFESHVHQIVYVSATPGDYENEQTDTVIEQIIRPTGLLDPEVEVRPTMGQIDDLLGEINARVEKNERTFITTLTKKMAEDLTDYFKEMGVKVKYMHSDIKTLERTEIIRDLRLGVFDVLVGINLLREGIDVPEVSLVAILDADKEGFLRNERGLIQTIGRAARNSEGHVIMYADTMTQSMQRAIDETARRRAIQMAYNEEHGIVPQTIKKEIRDLISVTKTALPDKEETVEIESLNKQERKDMIKKLEGQMQEAAGLLDFELAAQIRDMILEIKAMD.

In terms of domain architecture, Helicase ATP-binding spans 31–188 (DNIEGGEKAQ…NDLVDIQFER (158 aa)). 44–51 (GATGTGKT) is an ATP binding site. The short motif at 97–120 (YYDYYQPEAYVPSSDTYIEKDSSV) is the Beta-hairpin element. One can recognise a Helicase C-terminal domain in the interval 435-601 (QIDDLLGEIN…TIKKEIRDLI (167 aa)). One can recognise a UVR domain in the interval 626 to 661 (KDMIKKLEGQMQEAAGLLDFELAAQIRDMILEIKAM).

It belongs to the UvrB family. In terms of assembly, forms a heterotetramer with UvrA during the search for lesions. Interacts with UvrC in an incision complex.

The protein localises to the cytoplasm. The UvrABC repair system catalyzes the recognition and processing of DNA lesions. A damage recognition complex composed of 2 UvrA and 2 UvrB subunits scans DNA for abnormalities. Upon binding of the UvrA(2)B(2) complex to a putative damaged site, the DNA wraps around one UvrB monomer. DNA wrap is dependent on ATP binding by UvrB and probably causes local melting of the DNA helix, facilitating insertion of UvrB beta-hairpin between the DNA strands. Then UvrB probes one DNA strand for the presence of a lesion. If a lesion is found the UvrA subunits dissociate and the UvrB-DNA preincision complex is formed. This complex is subsequently bound by UvrC and the second UvrB is released. If no lesion is found, the DNA wraps around the other UvrB subunit that will check the other stand for damage. The polypeptide is UvrABC system protein B (Streptococcus gordonii (strain Challis / ATCC 35105 / BCRC 15272 / CH1 / DL1 / V288)).